Here is a 226-residue protein sequence, read N- to C-terminus: Putative integrase V10 (226 aa).

Catalysis depends on residues Arg-97, His-174, and Arg-177. Tyr-210 functions as the O-(3'-phospho-DNA)-tyrosine intermediate in the catalytic mechanism.

It belongs to the 'phage' integrase family.

May catalyze site-specific integration of viral genome into host or helper virus DNA. The chain is Putative integrase V10 from Acanthamoeba polyphaga (Amoeba).